We begin with the raw amino-acid sequence, 295 residues long: Transcription factor MYB34 (295 aa).

2 consecutive HTH myb-type domains span residues 9-61 and 62-116; these read EEGI…ANYL and RPDI…KKRL. 2 DNA-binding regions (H-T-H motif) span residues 37-61 and 89-112; these read WRTLPEKAGLKRCGKSCRLRWANYL and WAAIATSLAGRTDNEIKNYWNTNL.

As to quaternary structure, can form complexes with MYC2, MYC3 or MYC4. As to expression, expressed in trichomes.

The protein resides in the nucleus. In terms of biological role, transcription factor involved in tryptophan gene activation and in indole-3-acetic acid (IAA) and indolic glucosinolates (IG) biosynthesis. Acts as a direct transcriptional activator of both Trp synthesis genes and Trp secondary metabolism genes. The chain is Transcription factor MYB34 (MYB34) from Arabidopsis thaliana (Mouse-ear cress).